The sequence spans 285 residues: Inositol oxygenase (285 aa).

The interval 1-28 (MKVAADPDPSLVSQRDMEPEAAKDKDSF) is disordered. Basic and acidic residues predominate over residues 15–28 (RDMEPEAAKDKDSF). Substrate is bound at residue Arg29. Residue Ser33 is modified to Phosphoserine. 85–87 (DES) is a binding site for substrate. His98, His123, and Asp124 together coordinate Fe cation. Residues Lys127 and 141 to 142 (GD) each bind substrate. The Fe cation site is built by His194, His220, and Asp253. Residue 220–221 (HS) coordinates substrate.

Belongs to the myo-inositol oxygenase family. The cofactor is Fe cation.

It localises to the cytoplasm. The catalysed reaction is myo-inositol + O2 = D-glucuronate + H2O + H(+). It functions in the pathway polyol metabolism; myo-inositol degradation into D-glucuronate; D-glucuronate from myo-inositol: step 1/1. This Bos taurus (Bovine) protein is Inositol oxygenase (MIOX).